A 600-amino-acid chain; its full sequence is UvrABC system protein C (600 aa).

The region spanning 15 to 100 (NSTGVYQYFN…IKQLHPKYNI (86 aa)) is the GIY-YIG domain. The UVR domain maps to 203–238 (SVLLKNLEKQMLVLAQNENYEEAAKVRDQIAMIKDL).

The protein belongs to the UvrC family. As to quaternary structure, interacts with UvrB in an incision complex.

Its subcellular location is the cytoplasm. The UvrABC repair system catalyzes the recognition and processing of DNA lesions. UvrC both incises the 5' and 3' sides of the lesion. The N-terminal half is responsible for the 3' incision and the C-terminal half is responsible for the 5' incision. The protein is UvrABC system protein C of Campylobacter jejuni subsp. jejuni serotype O:2 (strain ATCC 700819 / NCTC 11168).